Consider the following 609-residue polypeptide: UvrABC system protein C (609 aa).

One can recognise a GIY-YIG domain in the interval 22 to 100 (EKPGVYQYLN…IKKYKPRYNV (79 aa)). The 36-residue stretch at 214–249 (QDISRMLVEKMQELANEMKFEEAQKIKEKYLLIENY) folds into the UVR domain.

It belongs to the UvrC family. As to quaternary structure, interacts with UvrB in an incision complex.

It localises to the cytoplasm. The UvrABC repair system catalyzes the recognition and processing of DNA lesions. UvrC both incises the 5' and 3' sides of the lesion. The N-terminal half is responsible for the 3' incision and the C-terminal half is responsible for the 5' incision. The sequence is that of UvrABC system protein C from Bacteroides thetaiotaomicron (strain ATCC 29148 / DSM 2079 / JCM 5827 / CCUG 10774 / NCTC 10582 / VPI-5482 / E50).